The sequence spans 4998 residues: SCO-spondin (4998 aa).

Residues 1–17 (MLPLALLFGMLWTQANG) form the signal peptide. Positions 18 to 102 (HWCEQIETVH…ACCPGWGGAH (85 aa)) constitute an EMI domain. The region spanning 72-241 (GLCAIYKPPE…KLPGSEPGCL (170 aa)) is the VWFD 1 domain. 2 disulfides stabilise this stretch: C74/C202 and C103/C240. N-linked (GlcNAc...) asparagine glycosylation is found at N88 and N130. The 56-residue stretch at 349 to 404 (CPGGQLYSDCVSSCPPSCSAVAQGEEGSCGKECVSGCECPTGLFWDGALCVPAAHC) folds into the TIL 1 domain. The 93-residue stretch at 404–496 (CPCYHRRQRY…HGACDTGSCL (93 aa)) folds into the VWFC 1 domain. The VWFD 2 domain occupies 442-615 (AECAVGGDGH…FQVSGDGRCP (174 aa)). Intrachain disulfides connect C444/C577 and C468/C614. N-linked (GlcNAc...) asparagine glycans are attached at residues N534 and N698. One can recognise a TIL 2 domain in the interval 706 to 759 (CPGGQVYQECAPVCGHHCGEPEDCKELGICVAGCNCPPGLLWDLEGQCVPPSMC). N-linked (GlcNAc...) asparagine glycans are attached at residues N771, N790, N824, and N866. Positions 892–1062 (GWCQASGAPH…HSWRLNPLCP (171 aa)) constitute a VWFD 3 domain. 3 disulfide bridges follow: C894–C1026, C916–C1061, and C937–C944. Residues 1153–1209 (CEGGQVYEPCGSTCPPTCHDHHSELRWHCQVITCVEGCFCPEGTLLHGGACMKLAAC) enclose the TIL 3 domain. An N-linked (GlcNAc...) asparagine glycan is attached at N1230. 4 consecutive LDL-receptor class A domains span residues 1253–1290 (GCAEGETLCRENGHCVPLEWLCDNQDDCGDGSDEEGCA), 1293–1328 (VCGEGQMSCQSGHCLPLSLICDGQDDCGDGTDEQGC), 1329–1365 (LCPHGSLACADGRCLPPALLCNGHPDCLDAADEESCL), and 1369–1407 (SCISGEVSCVDGTCVRTIQLCDGVWDCPDGADEGPSHCS). 12 cysteine pairs are disulfide-bonded: C1254-C1267, C1261-C1280, C1274-C1289, C1294-C1306, C1301-C1319, C1313-C1328, C1330-C1342, C1337-C1355, C1349-C1364, C1370-C1382, C1377-C1395, and C1389-C1406. The segment at 1406–1440 (CSLPSLPTPPGGIGQNPSTSSLDTAPSPVGSTSPA) is disordered. Polar residues predominate over residues 1420–1440 (QNPSTSSLDTAPSPVGSTSPA). LDL-receptor class A domains follow at residues 1442-1478 (PCSLLEFQCNSGECTPRGWRCDQEEDCTDGSDELDCG) and 1480-1519 (PCMLYQVPCAHSPHCVSPGQLCDGVTQCPDGSDEDPDVCE). 6 cysteine pairs are disulfide-bonded: C1443/C1455, C1450/C1468, C1462/C1477, C1481/C1494, C1488/C1507, and C1501/C1518. Residue N1528 is glycosylated (N-linked (GlcNAc...) asparagine). Residues 1533 to 1571 (PCPEFSCPDGTCIDFLLVCDGNPDCELADETEPSLDEQG) form the LDL-receptor class A 7 domain. 9 cysteine pairs are disulfide-bonded: C1534–C1544, C1539–C1557, C1551–C1572, C1584–C1620, C1588–C1625, C1599–C1610, C1640–C1680, C1644–C1685, and C1654–C1664. 2 TSP type-1 domains span residues 1572–1626 (CGAW…EACP) and 1628–1686 (DGEW…EGCL). An N-linked (GlcNAc...) asparagine glycan is attached at N1598. N1687 carries an N-linked (GlcNAc...) asparagine glycan. The TIL 4 domain maps to 1692-1746 (GELVFRTCAPCPLTCDDISGQAACPPDRPCSSPGCWCPDGKVLNTEGQCVRPRQC). EGF-like domains are found at residues 1702-1741 (CPLTCDDISGQAACPPDRPCSSPGCWCPDGKVLNTEGQCV) and 1742-1768 (RPRQCPCLVDGAHYWPGQRIKMDCQLC). The 57-residue stretch at 1771-1827 (DCGWSSWSPWAECLGPCSSQSLQWSFRSPNNPRLSGHGRQCRGIHRKARRCQTEACE) folds into the TSP type-1 3 domain. 3 disulfides stabilise this stretch: C1772-C1811, C1783-C1787, and C1821-C1826. The region spanning 1827–1887 (EGCEQWGLMY…GMGESCCHCA (61 aa)) is the VWFC 2 domain. N-linked (GlcNAc...) asparagine glycans are attached at residues N1892 and N1989. The 157-residue stretch at 1929–2085 (CYSPLGLAGL…IFLWVELLGL (157 aa)) folds into the F5/8 type C domain. The LDL-receptor class A 8 domain maps to 2091–2127 (LCPGSRHRCASGECAPKGGPCDGAVDCDDGSDEEGCG). Cystine bridges form between C2092–C2104, C2099–C2117, and C2111–C2126. Positions 2119 to 2209 (DGSDEEGCGS…TFPPGAKSLH (91 aa)) are disordered. Over residues 2130–2144 (HASTTSRTPALSPTQ) the composition is skewed to polar residues. Residues 2148 to 2158 (FPREVSEDLRQ) are compositionally biased toward basic and acidic residues. Polar residues-rich tracts occupy residues 2164-2173 (TSHSPPSSGE) and 2190-2201 (QPMQTLSATSTF). LDL-receptor class A domains lie at 2242-2278 (PCGPGQVPCDVLGCVEQEQLCDGREDCLDGSDEQHCA) and 2299-2335 (LCSPSQLRCGSGECLPFEHRCDLQVNCQDGSDEDNCV). Cystine bridges form between C2243–C2255, C2250–C2268, C2262–C2277, C2300–C2312, C2307–C2325, C2319–C2334, C2337–C2373, C2348–C2352, C2383–C2388, C2403–C2440, C2407–C2445, and C2418–C2430. TSP type-1 domains follow at residues 2336–2389 (DCVL…QACP) and 2391–2446 (AGAW…QLCP). Residues 2468-2511 (VPPCPPSCLDPEANRSCSGHCMEGCRCPPGLLLQDSHCLPLSEC) form the TIL 5 domain. N2481 and N2530 each carry an N-linked (GlcNAc...) asparagine glycan. 3 TSP type-1 domains span residues 2551–2605 (SCGW…TDCG), 2609–2664 (PGWT…PVCP), and 2666–2719 (PSAW…HPCT). 9 cysteine pairs are disulfide-bonded: C2552-C2590, C2563-C2567, C2600-C2604, C2620-C2658, C2624-C2663, C2640-C2648, C2678-C2713, C2682-C2718, and C2693-C2703. Residues N2772 and N2802 are each glycosylated (N-linked (GlcNAc...) asparagine). TSP type-1 domains lie at 2820–2875 (ACGW…RPCR) and 2876–2919 (GPGA…QPCA). 3 disulfides stabilise this stretch: C2821–C2859, C2832–C2836, and C2869–C2874. N-linked (GlcNAc...) asparagine glycosylation is found at N2897, N2952, N2999, and N3009. A TIL 6 domain is found at 2926–2978 (CPEDQQWLDCAQGPASCAHLSIPGEANQTCHPGCYCLSGMLLLNNVCVPVQDC). TSP type-1 domains follow at residues 3019-3086 (QPAW…PGCN) and 3088-3143 (AGGW…QPCP). 6 disulfides stabilise this stretch: C3031/C3080, C3035/C3085, C3046/C3070, C3100/C3137, C3104/C3142, and C3115/C3127. N-linked (GlcNAc...) asparagine glycosylation occurs at N3146. Positions 3151–3201 (EGAEYSPCGPPCPRSCDDLVHCVWRCQPGCYCPLGKVLSADGAICVKPSYC) constitute a TIL 7 domain. N-linked (GlcNAc...) asparagine glycosylation is present at N3235. TSP type-1 domains are found at residues 3244-3306 (SGDW…TACP) and 3308-3363 (DGAW…TLCT). 6 disulfides stabilise this stretch: C3256–C3299, C3260–C3305, C3271–C3283, C3320–C3355, C3323–C3362, and C3333–C3345. N3301 is a glycosylation site (N-linked (GlcNAc...) asparagine). The N-linked (GlcNAc...) asparagine glycan is linked to N3357. The TIL 8 domain maps to 3365-3421 (CGGGQDLLPCGQPCPHSCQDLSLGSTCQPGSAGCQSGCGCPPGQLSQDGLCVFPVDC). Residues N3435 and N3462 are each glycosylated (N-linked (GlcNAc...) asparagine). Positions 3481–3529 (PGIWSSWGPWEKCSVSCGGGEQLRSRQCARPPCPGLAQQSRICHIHVCR) constitute a TSP type-1 15 domain. Intrachain disulfides connect C3493/C3523, C3497/C3528, and C3508/C3513. N3638 carries an N-linked (GlcNAc...) asparagine glycan. TSP type-1 domains are found at residues 3657-3713 (HGSF…PECP), 3727-3779 (AGGW…PSCA), 3793-3849 (NCFW…RACP), and 3851-3906 (PGGW…MPCE). Cystine bridges form between C3669/C3707, C3673/C3712, and C3685/C3697. N3761 is a glycosylation site (N-linked (GlcNAc...) asparagine). Intrachain disulfides connect C3794/C3830, C3805/C3809, C3843/C3848, C3863/C3900, C3867/C3905, and C3878/C3890. Residues 3909–3964 (CPAGMEMVSCANHCPYSCSDLQEGGMCQEDQACQLGCRCSEGFLEQDGGCVPVGHC) form the TIL 9 domain. N3986 is a glycosylation site (N-linked (GlcNAc...) asparagine). 4 consecutive TSP type-1 domains span residues 4006-4059 (HCAW…VPCP), 4100-4155 (PRGW…QLCL), 4157-4213 (KLER…GPCQ), and 4215-4269 (DCTW…GNCS). 12 cysteine pairs are disulfide-bonded: C4007-C4043, C4018-C4022, C4053-C4058, C4112-C4149, C4116-C4154, C4127-C4139, C4169-C4207, C4173-C4212, C4184-C4195, C4216-C4253, C4227-C4229, and C4263-C4268. A glycan (N-linked (GlcNAc...) asparagine) is linked at N4196. N4267 is a glycosylation site (N-linked (GlcNAc...) asparagine). Residues 4273–4328 (CPPPFEFQSCGSPCAGLCATHLNHRLCQDLPPCQPGCYCPKGLLEQAGSCILPEQC) enclose the TIL 10 domain. 2 N-linked (GlcNAc...) asparagine glycosylation sites follow: N4408 and N4463. One can recognise a TSP type-1 24 domain in the interval 4465–4516 (TCQWGPWGPWSPCQMPCSGGFKLRWRVARDTSAGECPGPWAQTESCNMGSCP). 3 disulfide bridges follow: C4466–C4500, C4477–C4481, and C4510–C4515. The TIL 11 domain maps to 4530–4576 (DCANQCPRSCADLWDGVQCLQGPCSPGCRCPPGQLVQDGHCVPISSC). 3 N-linked (GlcNAc...) asparagine glycosylation sites follow: N4584, N4601, and N4606. Residues 4616 to 4669 (CPVLGPWSAWSECSAVCGKGTMVRHRSCEEHPDREPCQALDLQQWQECNLQACP) enclose the TSP type-1 25 domain. 3 cysteine pairs are disulfide-bonded: C4628-C4663, C4632-C4668, and C4643-C4652. The region spanning 4671–4725 (CPPGQVLSTCATMCPSLCSHLWPGTICVREPCQLGCGCPGGQLLYNGTCIPPEAC) is the TIL 12 domain. N-linked (GlcNAc...) asparagine glycans are attached at residues N4716, N4756, N4799, and N4806. The region spanning 4777–4835 (CAPGEIWQHGKLGPCEKTCPEMNMTQAWSNCTEAQAPGCVCQLGYFRSQTGLCVPEDHC) is the TIL 13 domain. One can recognise a VWFC 3 domain in the interval 4835 to 4893 (CECWHHGSPHLPGSEWQEACESCRCLHGKSVCIRHCPELSCAQGEVIMQEPGSCCPICQ). 4 cysteine pairs are disulfide-bonded: C4892-C4952, C4918-C4969, C4928-C4985, and C4932-C4987. A CTCK domain is found at 4892 to 4991 (CQQDTLKEEP…IHSCQCSACQ (100 aa)). N4912 carries an N-linked (GlcNAc...) asparagine glycan.

This sequence belongs to the thrombospondin family. As to expression, subcommissural organ.

Its subcellular location is the secreted. It is found in the extracellular space. In terms of biological role, involved in the modulation of neuronal aggregation. May be involved in developmental events during the formation of the central nervous system. The protein is SCO-spondin of Mus musculus (Mouse).